We begin with the raw amino-acid sequence, 623 residues long: Probable methyltransferase PMT8 (623 aa).

Residues 1–13 (MMRGRSDGGLKKR) are Cytoplasmic-facing. Residues 14–34 (LIASVCVVALFVCFLFMYYGS) form a helical; Signal-anchor for type II membrane protein membrane-spanning segment. At 35–623 (SSQGASALEY…LTSESLRDSE (589 aa)) the chain is on the lumenal side. N-linked (GlcNAc...) asparagine glycans are attached at residues Asn-204, Asn-350, and Asn-588.

It belongs to the methyltransferase superfamily.

The protein localises to the golgi apparatus membrane. The protein is Probable methyltransferase PMT8 of Arabidopsis thaliana (Mouse-ear cress).